The sequence spans 258 residues: Intron-associated endonuclease 2 (258 aa).

The GIY-YIG domain occupies S14–L96.

This endonuclease is specific to the nrdD gene splice junction and is involved in intron homing. This chain is Intron-associated endonuclease 2 (ITEVIIR), found in Escherichia coli (Bacteriophage T4).